Here is a 225-residue protein sequence, read N- to C-terminus: MNGIRDVVREEQPRERLLLEGAGSLSNRELLAVLLRTGSKEETVLKLSDKILHQFDGLRMLKDATLEELISIHGIGISKASQLMAAFELGRRMVRLEYQNRYSIRSPEDCAKYMMEEMRFLQQEHFVCLYLNTKNQVLHRQTIFIGSLNTSIVHPREVFKEAFRRAAASIICLHNHPSGDPTPSREDIEVTKRLVECGQIIGIEVLDHIIIGDHKFVSLKEKGHI.

The MPN domain occupies S103–I225. Zn(2+) contacts are provided by H174, H176, and D187. The JAMM motif signature appears at H174 to D187.

Belongs to the UPF0758 family.

The protein is UPF0758 protein BCG9842_B0662 of Bacillus cereus (strain G9842).